A 97-amino-acid chain; its full sequence is Co-chaperonin GroES (97 aa).

The protein belongs to the GroES chaperonin family. As to quaternary structure, heptamer of 7 subunits arranged in a ring. Interacts with the chaperonin GroEL.

The protein localises to the cytoplasm. Together with the chaperonin GroEL, plays an essential role in assisting protein folding. The GroEL-GroES system forms a nano-cage that allows encapsulation of the non-native substrate proteins and provides a physical environment optimized to promote and accelerate protein folding. GroES binds to the apical surface of the GroEL ring, thereby capping the opening of the GroEL channel. This Sodalis glossinidius (strain morsitans) protein is Co-chaperonin GroES.